The sequence spans 118 residues: UPF0344 protein YisL (118 aa).

The next 4 membrane-spanning stretches (helical) occupy residues 4–24 (LHITTWVVALILLFVSYSLYS), 33–53 (ITHMILRLFYILIILTGAELF), 62–82 (EYAGKMILGIITIGLMEMLLI), and 93–113 (LWVGFVIVLLLTVLLGLHLPI).

Belongs to the UPF0344 family.

It localises to the cell membrane. In Bacillus subtilis (strain 168), this protein is UPF0344 protein YisL (yisL).